The primary structure comprises 425 residues: Dual-specificity RNA methyltransferase RlmN (425 aa).

Glutamate 136 functions as the Proton acceptor in the catalytic mechanism. The 240-residue stretch at 142-381 (GDDRGTLCVS…FTAGYASPVR (240 aa)) folds into the Radical SAM core domain. A disulfide bond links cysteine 149 and cysteine 392. [4Fe-4S] cluster contacts are provided by cysteine 156, cysteine 160, and cysteine 163. S-adenosyl-L-methionine is bound by residues 218–219 (GE), serine 250, 272–274 (SLH), and asparagine 349. Cysteine 392 (S-methylcysteine intermediate) is an active-site residue.

The protein belongs to the radical SAM superfamily. RlmN family. Requires [4Fe-4S] cluster as cofactor.

It is found in the cytoplasm. It carries out the reaction adenosine(2503) in 23S rRNA + 2 reduced [2Fe-2S]-[ferredoxin] + 2 S-adenosyl-L-methionine = 2-methyladenosine(2503) in 23S rRNA + 5'-deoxyadenosine + L-methionine + 2 oxidized [2Fe-2S]-[ferredoxin] + S-adenosyl-L-homocysteine. It catalyses the reaction adenosine(37) in tRNA + 2 reduced [2Fe-2S]-[ferredoxin] + 2 S-adenosyl-L-methionine = 2-methyladenosine(37) in tRNA + 5'-deoxyadenosine + L-methionine + 2 oxidized [2Fe-2S]-[ferredoxin] + S-adenosyl-L-homocysteine. Specifically methylates position 2 of adenine 2503 in 23S rRNA and position 2 of adenine 37 in tRNAs. m2A2503 modification seems to play a crucial role in the proofreading step occurring at the peptidyl transferase center and thus would serve to optimize ribosomal fidelity. This chain is Dual-specificity RNA methyltransferase RlmN, found in Methylorubrum extorquens (strain PA1) (Methylobacterium extorquens).